A 183-amino-acid polypeptide reads, in one-letter code: Apo-citrate lyase phosphoribosyl-dephospho-CoA transferase (183 aa).

It belongs to the CitX family.

The enzyme catalyses apo-[citrate lyase ACP] + 2'-(5''-triphospho-alpha-D-ribosyl)-3'-dephospho-CoA = holo-[citrate lyase ACP] + diphosphate. Functionally, transfers 2-(5''-triphosphoribosyl)-3'-dephosphocoenzyme-A on a serine residue to the apo-acyl carrier protein (gamma chain) of the citrate lyase to yield holo-acyl carrier protein. This Escherichia coli O9:H4 (strain HS) protein is Apo-citrate lyase phosphoribosyl-dephospho-CoA transferase.